The primary structure comprises 116 residues: uncharacterized protein (116 aa).

Residues 20-42 traverse the membrane as a helical segment; sequence YLNKYYSVITYFLAFLTKFAILL. Residues 95–116 form a disordered region; sequence IEFQSKSSPVPPASESNKGINE.

The protein localises to the membrane. This is an uncharacterized protein from Saccharomyces cerevisiae (strain ATCC 204508 / S288c) (Baker's yeast).